The following is a 162-amino-acid chain: 2-C-methyl-D-erythritol 2,4-cyclodiphosphate synthase (162 aa).

A divalent metal cation contacts are provided by D8 and H10. Residues 8-10 (DVH) and 34-35 (HS) each bind 4-CDP-2-C-methyl-D-erythritol 2-phosphate. Residue H42 participates in a divalent metal cation binding. Residues 56–58 (DIG), 61–65 (FPDND), 132–135 (TTTE), F139, and K142 each bind 4-CDP-2-C-methyl-D-erythritol 2-phosphate.

Belongs to the IspF family. In terms of assembly, homotrimer. A divalent metal cation serves as cofactor.

The enzyme catalyses 4-CDP-2-C-methyl-D-erythritol 2-phosphate = 2-C-methyl-D-erythritol 2,4-cyclic diphosphate + CMP. It functions in the pathway isoprenoid biosynthesis; isopentenyl diphosphate biosynthesis via DXP pathway; isopentenyl diphosphate from 1-deoxy-D-xylulose 5-phosphate: step 4/6. Its function is as follows. Involved in the biosynthesis of isopentenyl diphosphate (IPP) and dimethylallyl diphosphate (DMAPP), two major building blocks of isoprenoid compounds. Catalyzes the conversion of 4-diphosphocytidyl-2-C-methyl-D-erythritol 2-phosphate (CDP-ME2P) to 2-C-methyl-D-erythritol 2,4-cyclodiphosphate (ME-CPP) with a corresponding release of cytidine 5-monophosphate (CMP). This chain is 2-C-methyl-D-erythritol 2,4-cyclodiphosphate synthase, found in Pelotomaculum thermopropionicum (strain DSM 13744 / JCM 10971 / SI).